The chain runs to 1728 residues: MASSLAAQLAQIAANSRTSLNAKALKATHSKSLIWEPRVAAGQTFAEIYQLSYEGFEELCNLDARFAQYGASLFSEQSQEADRIQMNAEENAVLDKRVDSFLHLVGSRLRLMPAIKAIEWLIRRFRSLTAPPRAAIVQQATNRPELLSVISQYTLESCRARQEYPGLVSFWGGVMAEAANGMLDKMRSGRRSIQLENDHILLQQIGPVLSEAMVMKEVPGIQIASYMIVTILAAKGSLNDVALTAFMDQLVHGWNIDTYRPGLVCLCILAQHRAAKQVSSRIAKALIKVQDLVPTLVEISRQHRVDKLANGLALAFIERLSKKGDVRSLPAINSLLSANLLRDKQIKVIYKSMLLAAHKVNDEVDEDGHIRKEIGSSLISLSQTGGDVGDVIRSAIEEVDFNIEELELKLGAAIRPKLAIEQSSEEAGAEEGAMAVENTLSLASTFQELAKLQPSTVSCLSQDSSGLFNDLCAVLLSAAAAESDMEKFDSIPALSRPLATSNPFYLSFYMRVWCGPFPTLAKVAALERVKLRLKESDCADKDFQAIIPYCAVALSDPAKKVRRAAADLIAVLGSLVKEQTRQVWGAKDLYGKVGAPNALDRDTLKALVSSVLVPSLEESVLHEAHVVAVLVSALESSKGSSGTEGGRRHLSHATRLSIFKFICGHVTETPLLAVKIRLLRSLNQIRSISGTSRTDLLLPLLRWWAALGHEEVIELTARESLDEATVDQAVVDVIIANHAAGLETAFELINDPKTALRPHLVQAIFCRVIKMWPSMKSDTKSSTARFMFNITQTLSSSEHGPVITEAVELLRKVELTTDIQLDLIDSLQDQVKLATEKPANKRRRVSTTEQSRSVGLQSNPELKAALNKTTFVLELVQESDPANHPELLPSLFTTLSDLHHLSTLIGSELGYLQNLVLSSLLAMMPAYKDNKNLTIDASVGHGDILATCIQKSSSPAVINAALLLVASLARTAPDVVLQSVMPIFTFMGSSEVIPPLIDTFRRRGRNVVASTKDLLASFVTAYEHIPSHRKHDLFISLVQNLGPEDFLFAILAMFVDRYAATDNMISFTTQMMSSFSVEIQLQTLIKLLDLTSDIFKPKPSLSNVLLGGDGSEHDTQKVATKQLNLLPHLLANKRLKREITQLAERDDMETGKIRDLYATLLESILTLATTVKNKKALYNRCGDALSNLLNLLSIAEFIKSVEALLDRPNVGLRQKVLRALELRVDSESTADPRSREALLAFLPQLTAVIRESDDMSYKHTAVTCVDKISEKYGKKDLDAVAAAAATIAGDYCLGQSSQTLRVMALLCLASLVDVLQDGIVPVLPVAIPKALDYLEQSLVGEEPNAELHNAAYAFVAALAQHIPYMITGSYLDRLLACSNASAAAALDDESSSNRTHCLQFLAKLVDPKVMYNALNQNWASASSCGASAVSEYLDILGMALDKHSKAAVAKNVASLSTIFLSAMDLRRTVVSGQAKTAISPSELGEIETKIGDDALKMIYKLNDAAFRPIFSKLMEWASTGLPKNDASGRTLRLFAVYGFLDTFFGNLKSIVTSYASYIVESAVQVLSSTNFQDADEKELWKWVLRTLGKCFEHDQDGFWQAPAHFGAVAPVLVEQFLNAGAADATEDLIPALVELAAAADSQEHHKELNGTLLKHLRNGQAAVRLAVVQCQQALTVRLGEEWLQALPEMLPYISELQDDDDEVVERENRRWIVEIEEKLGESLDSMLQ.

HEAT repeat units lie at residues 540-578 (DKDFQAIIPYCAVALSDPAKKVRRAAADLIAVLGSLVKE), 881-926 (PANH…MMPA), 986-1024 (FMGSSEVIPPLIDTFRRRGRNVVASTKDLLASFVTAYEH), 1191-1229 (LLSIAEFIKSVEALLDRPNVGLRQKVLRALELRVDSEST), 1235-1274 (REALLAFLPQLTAVIRESDDMSYKHTAVTCVDKISEKYGK), 1622-1662 (ADAT…GQAA), and 1683-1721 (LQALPEMLPYISELQDDDDEVVERENRRWIVEIEEKLGE).

This sequence belongs to the HEATR1/UTP10 family. As to quaternary structure, component of the ribosomal small subunit (SSU) processome.

The protein resides in the nucleus. It is found in the nucleolus. Its function is as follows. Involved in nucleolar processing of pre-18S ribosomal RNA. Involved in ribosome biosynthesis. This is U3 small nucleolar RNA-associated protein 10 from Chaetomium globosum (strain ATCC 6205 / CBS 148.51 / DSM 1962 / NBRC 6347 / NRRL 1970) (Soil fungus).